The following is an 824-amino-acid chain: Leucine--tRNA ligase (824 aa).

The 'HIGH' region signature appears at 41 to 51 (PYPSGTLHVGH). The 'KMSKS' region signature appears at 580 to 584 (KMSKS). K583 contacts ATP.

It belongs to the class-I aminoacyl-tRNA synthetase family.

The protein resides in the cytoplasm. It catalyses the reaction tRNA(Leu) + L-leucine + ATP = L-leucyl-tRNA(Leu) + AMP + diphosphate. The polypeptide is Leucine--tRNA ligase (Thermotoga petrophila (strain ATCC BAA-488 / DSM 13995 / JCM 10881 / RKU-1)).